Reading from the N-terminus, the 914-residue chain is Calcium-activated chloride channel regulator 1 (914 aa).

The N-terminal stretch at 1-21 (MGPFKSSVFILILHLLEGALS) is a signal peptide. The interval 46–199 (DETLIQQIKD…GITGTNVVKK (154 aa)) is metalloprotease domain. Position 156 (H156) interacts with Zn(2+). E157 is an active-site residue. Residues H160 and D167 each contribute to the Zn(2+) site. Residues 306 to 475 (IVCLVLDKSG…NGLIDAFGAL (170 aa)) enclose the VWFA domain. N503, N585, N770, N804, N810, N831, N836, and N890 each carry an N-linked (GlcNAc...) asparagine glycan.

The protein belongs to the CLCR family. Glycosylated. In terms of processing, the 125-kDa product is autoproteolytically processed by the metalloprotease domain and yields to two cell-surface-associated subunits, a 90-kDa protein and a group of 37- to 41-kDa proteins. The cleavage is necessary for calcium-activated chloride channel (CaCC) activation activity. In terms of tissue distribution, highly expressed in small intestine and colon namely in intestinal basal crypt epithelia and goblet cells, and appendix. Weakly expressed in uterus, testis and kidney. Expressed in the airways epithelium of both asthmatic and healthy patients. Expressed in the bronchial epithelium, especially in mucus-producing goblet cells. Expressed in normal turbinate mucosa and nasal polyp. Expressed in.

It localises to the secreted. The protein localises to the extracellular space. The protein resides in the cell membrane. Its function is as follows. May be involved in mediating calcium-activated chloride conductance. May play critical roles in goblet cell metaplasia, mucus hypersecretion, cystic fibrosis and AHR. May be involved in the regulation of mucus production and/or secretion by goblet cells. Involved in the regulation of tissue inflammation in the innate immune response. May play a role as a tumor suppressor. Induces MUC5AC. This Homo sapiens (Human) protein is Calcium-activated chloride channel regulator 1 (CLCA1).